A 146-amino-acid polypeptide reads, in one-letter code: Large ribosomal subunit protein uL15 (146 aa).

Positions 1 to 13 are enriched in basic and acidic residues; the sequence is MKLHELKPAEGSR. The disordered stretch occupies residues 1–56; the sequence is MKLHELKPAEGSRKVRNRVGRGAATGNGKTSGRGQKGQKARSGGSVRPGFEGGQLP. A compositionally biased stretch (gly residues) spans 23–35; sequence AATGNGKTSGRGQ.

Belongs to the universal ribosomal protein uL15 family. Part of the 50S ribosomal subunit.

Functionally, binds to the 23S rRNA. The chain is Large ribosomal subunit protein uL15 from Staphylococcus saprophyticus subsp. saprophyticus (strain ATCC 15305 / DSM 20229 / NCIMB 8711 / NCTC 7292 / S-41).